We begin with the raw amino-acid sequence, 408 residues long: CinA-like protein (408 aa).

Belongs to the CinA family.

This chain is CinA-like protein, found in Anaeromyxobacter sp. (strain K).